Here is a 64-residue protein sequence, read N- to C-terminus: Defensin-like protein 123 (64 aa).

4 cysteine pairs are disulfide-bonded: cysteine 19–cysteine 62, cysteine 29–cysteine 49, cysteine 34–cysteine 56, and cysteine 38–cysteine 58.

This sequence belongs to the DEFL family.

This Arabidopsis thaliana (Mouse-ear cress) protein is Defensin-like protein 123.